Consider the following 301-residue polypeptide: Lufaxin (301 aa).

An N-terminal signal peptide occupies residues 1–23 (MNSINFLSIVGLISFGFIVAVKC). Cystine bridges form between Cys-52-Cys-60, Cys-78-Cys-137, Cys-102-Cys-112, and Cys-258-Cys-265. Asn-262 carries an N-linked (GlcNAc...) asparagine glycan.

In terms of assembly, interacts with factor Xa. Associates with complement proconvertase C3b-B complex. As to expression, expressed in salivary glands.

The protein resides in the secreted. Its function is as follows. Sand fly salivary protein with antithrombotic, and anti-complement (alternative pathway) activities. Is a slow, tight, non-competitive, and reversible inhibitor of factor Xa (FXa, F10). Is specific for FXa (Kd=3.86 nM) and does not interact with non-activated FX, or all other enzymes tested. In addition, it blocks prothrombinase and increases both prothrombin time and activated partial thromboplastin time. It also prevents protease-activated receptor 2 (F2RL1, PAR2) activation by FXa. In vivo, it abrogates edema formation triggered by injection of FXa in the paw of mice. Moreover, it prevents FeCl(3)-induced carotid artery thrombus formation and prolongs activated partial thromboplastin time ex vivo, implying that it works as an anticoagulant in vivo. It also inhibits the early steps of the alternative pathway of complement by direct binding to the proconvertase C3b-B complex, by inhibiting activation of factor B and consequently the formation of the C3 convertase. In Lutzomyia longipalpis (Sand fly), this protein is Lufaxin.